Reading from the N-terminus, the 209-residue chain is Protease (209 aa).

Active-site residues include H55, D72, and C123.

The protein belongs to the peptidase C5 family. As to quaternary structure, interacts with protease cofactor pVI-C; this interaction is necessary for protease activation.

It localises to the virion. The protein resides in the host nucleus. The enzyme catalyses Cleaves proteins of the adenovirus and its host cell at two consensus sites: -Yaa-Xaa-Gly-Gly-|-Xaa- and -Yaa-Xaa-Gly-Xaa-|-Gly- (in which Yaa is Met, Ile or Leu, and Xaa is any amino acid).. With respect to regulation, requires DNA and protease cofactor for maximal activation. Inside nascent virions, becomes partially activated by binding to the viral DNA, allowing it to cleave the cofactor that binds to the protease and fully activates it. Actin, like the viral protease cofactor, seems to act as a cofactor in the cleavage of cytokeratin 18 and of actin itself. Functionally, cleaves viral precursor proteins (pTP, pIIIa, pVI, pVII, pVIII, and pX) inside newly assembled particles giving rise to mature virions. Protease complexed to its cofactor slides along the viral DNA to specifically locate and cleave the viral precursors. Mature virions have a weakened organization compared to the unmature virions, thereby facilitating subsequent uncoating. Without maturation, the particle lacks infectivity and is unable to uncoat. Late in adenovirus infection, in the cytoplasm, may participate in the cytoskeleton destruction. Cleaves host cell cytoskeletal keratins K7 and K18. This is Protease from Human adenovirus D serotype 9 (HAdV-9).